Consider the following 150-residue polypeptide: Large ribosomal subunit protein uL15 (150 aa).

Basic and acidic residues predominate over residues 1–13 (MADNDAIKVHDLR). The tract at residues 1-44 (MADNDAIKVHDLRPAPGAKTAKTRVGRGEASKGKTAGRGTKGTK) is disordered.

It belongs to the universal ribosomal protein uL15 family. Part of the 50S ribosomal subunit.

In terms of biological role, binds to the 23S rRNA. This chain is Large ribosomal subunit protein uL15, found in Micrococcus luteus (strain ATCC 4698 / DSM 20030 / JCM 1464 / CCM 169 / CCUG 5858 / IAM 1056 / NBRC 3333 / NCIMB 9278 / NCTC 2665 / VKM Ac-2230) (Micrococcus lysodeikticus).